A 232-amino-acid chain; its full sequence is Sec-independent protein translocase protein TatB (232 aa).

The chain crosses the membrane as a helical span at residues 1–21 (MFDIGFGELMLLFVIGLVVLG). Disordered stretches follow at residues 108-129 (EPHT…GVTP) and 176-232 (AAST…NNDR). Low complexity-rich tracts occupy residues 189 to 203 (ADSA…ATPA) and 214 to 232 (RAAT…NNDR).

The protein belongs to the TatB family. The Tat system comprises two distinct complexes: a TatABC complex, containing multiple copies of TatA, TatB and TatC subunits, and a separate TatA complex, containing only TatA subunits. Substrates initially bind to the TatABC complex, which probably triggers association of the separate TatA complex to form the active translocon.

Its subcellular location is the cell inner membrane. In terms of biological role, part of the twin-arginine translocation (Tat) system that transports large folded proteins containing a characteristic twin-arginine motif in their signal peptide across membranes. Together with TatC, TatB is part of a receptor directly interacting with Tat signal peptides. TatB may form an oligomeric binding site that transiently accommodates folded Tat precursor proteins before their translocation. In Sodalis glossinidius (strain morsitans), this protein is Sec-independent protein translocase protein TatB.